The chain runs to 110 residues: NADH-quinone oxidoreductase subunit K (110 aa).

3 consecutive transmembrane segments (helical) span residues 13–33 (LNHY…GLFM), 41–61 (ILMS…AFSV), and 73–93 (IIIL…LLIY).

It belongs to the complex I subunit 4L family. As to quaternary structure, NDH-1 is composed of 14 different subunits. Subunits NuoA, H, J, K, L, M, N constitute the membrane sector of the complex.

Its subcellular location is the cell inner membrane. It catalyses the reaction a quinone + NADH + 5 H(+)(in) = a quinol + NAD(+) + 4 H(+)(out). In terms of biological role, NDH-1 shuttles electrons from NADH, via FMN and iron-sulfur (Fe-S) centers, to quinones in the respiratory chain. The immediate electron acceptor for the enzyme in this species is believed to be ubiquinone. Couples the redox reaction to proton translocation (for every two electrons transferred, four hydrogen ions are translocated across the cytoplasmic membrane), and thus conserves the redox energy in a proton gradient. The protein is NADH-quinone oxidoreductase subunit K of Rickettsia prowazekii (strain Madrid E).